The primary structure comprises 384 residues: Alpha-2B adrenergic receptor (384 aa).

Residues 1-25 (AIAAVTTFLILFTVFGNALVILAVL) form a helical membrane-spanning segment. Topologically, residues 26–36 (TSRSLRAPQNL) are cytoplasmic. Residues 37–62 (FLVSLAAADILVATLIXPFSLANELL) form a helical membrane-spanning segment. At 63–72 (GYWYFWHTWC) the chain is on the extracellular side. Residues Cys-72 and Cys-151 are joined by a disulfide bond. The chain crosses the membrane as a helical span at residues 73 to 95 (EVYLALXVLXCTSSIVHLCAISL). The Cytoplasmic segment spans residues 96-117 (DRYWAVSRALEYNSKRTPRRIX). The helical transmembrane segment at 118 to 140 (GIILTVWLIAAAISLPPLIYKGD) threads the bilayer. Residues 141–156 (QGPQPHGRPQCRLNQE) lie on the Extracellular side of the membrane. A helical membrane pass occupies residues 157–180 (AWYILSSSIGSFFAPCLIMILVYL). Over 181-348 (RIYLIAKRRN…LTREKRFTFV (168 aa)) the chain is Cytoplasmic. The segment at 193 to 306 (GPRAQGASKG…SXGSPQLQQP (114 aa)) is disordered. Residues 288 to 306 (PEALPASPASXGSPQLQQP) are compositionally biased toward low complexity. A helical membrane pass occupies residues 349 to 372 (LAVVIGVXVLCWFPFFXSYSLGAI). Residues 373–381 (CPQHCTVXH) lie on the Extracellular side of the membrane. Residues 382 to 384 (GLF) traverse the membrane as a helical segment.

The protein belongs to the G-protein coupled receptor 1 family. Adrenergic receptor subfamily. ADRA2B sub-subfamily. Interacts with RAB26. Interacts with PPP1R9B. Interacts with GGA1, GGA2 and GGA3.

Its subcellular location is the cell membrane. In terms of biological role, alpha-2 adrenergic receptors mediate the catecholamine-induced inhibition of adenylate cyclase through the action of G proteins. The sequence is that of Alpha-2B adrenergic receptor (ADRA2B) from Echinops telfairi (Lesser hedgehog tenrec).